Here is a 485-residue protein sequence, read N- to C-terminus: Katanin p60 ATPase-containing subunit A1 (485 aa).

Positions 101–173 (HRSSPCVVRK…KNKAEAVETE (73 aa)) are disordered. Residues 141–173 (NGDKGKPQKSKEKKENPSKPKEDKNKAEAVETE) are compositionally biased toward basic and acidic residues. 244–251 (GPPGTGKT) is an ATP binding site.

Belongs to the AAA ATPase family. Katanin p60 subunit A1 subfamily. Can homooligomerize into hexameric rings, which may be promoted by interaction with microtubules. Interacts with katnb1, which may serve as a targeting subunit.

The protein localises to the cytoplasm. It localises to the cytoskeleton. It is found in the microtubule organizing center. The protein resides in the centrosome. Its subcellular location is the spindle pole. The protein localises to the spindle. It carries out the reaction n ATP + n H2O + a microtubule = n ADP + n phosphate + (n+1) alpha/beta tubulin heterodimers.. ATPase activity is stimulated by microtubules, which promote homooligomerization. ATP-dependent microtubule severing is stimulated by interaction with katnb1. Functionally, catalytic subunit of a complex which severs microtubules in an ATP-dependent manner. Microtubule severing may promote rapid reorganization of cellular microtubule arrays and the release of microtubules from the centrosome following nucleation. In Danio rerio (Zebrafish), this protein is Katanin p60 ATPase-containing subunit A1 (katna1).